Here is a 147-residue protein sequence, read N- to C-terminus: Large ribosomal subunit protein bL9 (147 aa).

It belongs to the bacterial ribosomal protein bL9 family.

Its function is as follows. Binds to the 23S rRNA. In Citrifermentans bemidjiense (strain ATCC BAA-1014 / DSM 16622 / JCM 12645 / Bem) (Geobacter bemidjiensis), this protein is Large ribosomal subunit protein bL9.